The chain runs to 286 residues: Putative electron transfer flavoprotein subunit YgcQ (286 aa).

225 to 253 (VCIVVGASGAAALMAGVRNSKFVVAINHD) contacts FAD.

The protein belongs to the ETF alpha-subunit/FixB family. In terms of assembly, ygcQ and YgcR form a heterodimer.

May play a role in a redox process. This Escherichia coli (strain K12) protein is Putative electron transfer flavoprotein subunit YgcQ (ygcQ).